Here is a 157-residue protein sequence, read N- to C-terminus: Ubiquitin-like protein 4A (157 aa).

The 76-residue stretch at 1-76 (MQLTVKALQG…LNLVVKPLEK (76 aa)) folds into the Ubiquitin-like domain. A Glycyl lysine isopeptide (Lys-Gly) (interchain with G-Cter in ubiquitin) cross-link involves residue Lys48. At Ser90 the chain carries Phosphoserine. The tract at residues 96–138 (WQLISKVLARHFSAADASRVLEQLQRDYERSLSRLTLDDIERL) is required and sufficient for interaction with BAG6.

Component of the BAG6/BAT3 complex, at least composed of BAG6, UBL4A and GET4/TRC35. Interacts with BAG6; the interaction is direct and required for UBL4A protein stability. Interacts with USP13; may be indirect via BAG6. In terms of processing, polyubiquitinated. Ubiquitination by AMFR and deubiquitination by USP13 may regulate the interaction between the BAG6/BAT3 complex and SGTA and therefore may regulate client proteins fate.

The protein resides in the cytoplasm. It is found in the cytosol. The protein localises to the nucleus. In terms of biological role, as part of a cytosolic protein quality control complex, the BAG6/BAT3 complex, maintains misfolded and hydrophobic patches-containing proteins in a soluble state and participates in their proper delivery to the endoplasmic reticulum or alternatively can promote their sorting to the proteasome where they undergo degradation. The BAG6/BAT3 complex is involved in the post-translational delivery of tail-anchored/type II transmembrane proteins to the endoplasmic reticulum membrane. Recruited to ribosomes, it interacts with the transmembrane region of newly synthesized tail-anchored proteins and together with SGTA and ASNA1 mediates their delivery to the endoplasmic reticulum. Client proteins that cannot be properly delivered to the endoplasmic reticulum are ubiquitinated and sorted to the proteasome. Similarly, the BAG6/BAT3 complex also functions as a sorting platform for proteins of the secretory pathway that are mislocalized to the cytosol either delivering them to the proteasome for degradation or to the endoplasmic reticulum. The BAG6/BAT3 complex also plays a role in the endoplasmic reticulum-associated degradation (ERAD), a quality control mechanism that eliminates unwanted proteins of the endoplasmic reticulum through their retrotranslocation to the cytosol and their targeting to the proteasome. It maintains these retrotranslocated proteins in an unfolded yet soluble state condition in the cytosol to ensure their proper delivery to the proteasome. This Homo sapiens (Human) protein is Ubiquitin-like protein 4A.